The sequence spans 546 residues: CTP synthase (546 aa).

The amidoligase domain stretch occupies residues 1 to 269; the sequence is MNSNTKIIFV…DAKLVELLNL (269 aa). A CTP-binding site is contributed by S16. Residue S16 coordinates UTP. ATP contacts are provided by residues 17–22 and D74; that span reads SLGKGV. 2 residues coordinate Mg(2+): D74 and E143. CTP contacts are provided by residues 150–152, 190–195, and K226; these read DIE and KTKPTQ. Residues 190-195 and K226 each bind UTP; that span reads KTKPTQ. The Glutamine amidotransferase type-1 domain maps to 294-546; it reads TIAMVGKYVS…IQAAIENSNN (253 aa). L-glutamine is bound at residue G356. C383 serves as the catalytic Nucleophile; for glutamine hydrolysis. L-glutamine contacts are provided by residues 384–387, E407, and R474; that span reads LGMQ. Active-site residues include H519 and E521.

Belongs to the CTP synthase family. In terms of assembly, homotetramer.

The catalysed reaction is UTP + L-glutamine + ATP + H2O = CTP + L-glutamate + ADP + phosphate + 2 H(+). It catalyses the reaction L-glutamine + H2O = L-glutamate + NH4(+). It carries out the reaction UTP + NH4(+) + ATP = CTP + ADP + phosphate + 2 H(+). It functions in the pathway pyrimidine metabolism; CTP biosynthesis via de novo pathway; CTP from UDP: step 2/2. With respect to regulation, allosterically activated by GTP, when glutamine is the substrate; GTP has no effect on the reaction when ammonia is the substrate. The allosteric effector GTP functions by stabilizing the protein conformation that binds the tetrahedral intermediate(s) formed during glutamine hydrolysis. Inhibited by the product CTP, via allosteric rather than competitive inhibition. Its function is as follows. Catalyzes the ATP-dependent amination of UTP to CTP with either L-glutamine or ammonia as the source of nitrogen. Regulates intracellular CTP levels through interactions with the four ribonucleotide triphosphates. The polypeptide is CTP synthase (Francisella tularensis subsp. tularensis (strain FSC 198)).